Consider the following 143-residue polypeptide: MAKKIIGFIKLQIPAGKANPSPPVGPALGQRGLNIMEFCKAFNAQTQSMEPGLPIPVVITAFADKSFTFIMKTPPTTIMIKKAAKIEKGSPRPHTDKVGSITRAQAEEIAKAKMPDLTAADMDAAVRTIAGSARSMGITVEGF.

The protein belongs to the universal ribosomal protein uL11 family. In terms of assembly, part of the ribosomal stalk of the 50S ribosomal subunit. Interacts with L10 and the large rRNA to form the base of the stalk. L10 forms an elongated spine to which L12 dimers bind in a sequential fashion forming a multimeric L10(L12)X complex. In terms of processing, one or more lysine residues are methylated.

Forms part of the ribosomal stalk which helps the ribosome interact with GTP-bound translation factors. The protein is Large ribosomal subunit protein uL11 of Polynucleobacter necessarius subsp. necessarius (strain STIR1).